The following is a 307-amino-acid chain: Acetaldehyde dehydrogenase (307 aa).

12–15 (SGNI) contacts NAD(+). Cys-130 (acyl-thioester intermediate) is an active-site residue. Residues 161–169 (SVGPGTRQN) and Asn-272 contribute to the NAD(+) site.

The protein belongs to the acetaldehyde dehydrogenase family.

The catalysed reaction is acetaldehyde + NAD(+) + CoA = acetyl-CoA + NADH + H(+). The chain is Acetaldehyde dehydrogenase from Shewanella halifaxensis (strain HAW-EB4).